The following is a 588-amino-acid chain: Aspartate--tRNA ligase (588 aa).

Residue Glu174 participates in L-aspartate binding. The interval Gln198–Lys201 is aspartate. Arg220 is a binding site for L-aspartate. ATP contacts are provided by residues Arg220–Glu222 and Gln229. His448 is an L-aspartate binding site. An ATP-binding site is contributed by Glu482. Arg489 serves as a coordination point for L-aspartate. Gly534–Arg537 is a binding site for ATP.

This sequence belongs to the class-II aminoacyl-tRNA synthetase family. Type 1 subfamily. As to quaternary structure, homodimer.

It localises to the cytoplasm. The catalysed reaction is tRNA(Asp) + L-aspartate + ATP = L-aspartyl-tRNA(Asp) + AMP + diphosphate. Catalyzes the attachment of L-aspartate to tRNA(Asp) in a two-step reaction: L-aspartate is first activated by ATP to form Asp-AMP and then transferred to the acceptor end of tRNA(Asp). The chain is Aspartate--tRNA ligase from Xanthomonas oryzae pv. oryzae (strain MAFF 311018).